Reading from the N-terminus, the 424-residue chain is Adenylosuccinate synthetase (424 aa).

Residues 11–17 (GDEGKGK) and 39–41 (GHT) each bind GTP. Aspartate 12 serves as the catalytic Proton acceptor. The Mg(2+) site is built by aspartate 12 and glycine 39. Residues 12 to 15 (DEGK), 37 to 40 (NAGH), threonine 127, arginine 141, glutamine 223, threonine 238, and arginine 302 contribute to the IMP site. The active-site Proton donor is the histidine 40. 298-304 (TTTGRGR) serves as a coordination point for substrate. Residues arginine 304, 330-332 (KLD), and 412-414 (SVG) each bind GTP.

It belongs to the adenylosuccinate synthetase family. As to quaternary structure, homodimer. Mg(2+) serves as cofactor.

The protein localises to the cytoplasm. The enzyme catalyses IMP + L-aspartate + GTP = N(6)-(1,2-dicarboxyethyl)-AMP + GDP + phosphate + 2 H(+). The protein operates within purine metabolism; AMP biosynthesis via de novo pathway; AMP from IMP: step 1/2. Plays an important role in the de novo pathway of purine nucleotide biosynthesis. Catalyzes the first committed step in the biosynthesis of AMP from IMP. This is Adenylosuccinate synthetase from Methanosarcina barkeri (strain Fusaro / DSM 804).